Reading from the N-terminus, the 699-residue chain is tRNA(Met) cytidine acetyltransferase TmcA (699 aa).

ATP contacts are provided by residues Gln-179, 201–210 (GRGKSTLAGM), and Arg-323. The N-acetyltransferase domain occupies 359 to 543 (IEIPLYEQRD…SGCYTAMALL (185 aa)). Acetyl-CoA-binding positions include 471 to 473 (VAV), Glu-511, and Arg-518.

It belongs to the RNA cytidine acetyltransferase family. TmcA subfamily.

It localises to the cytoplasm. The catalysed reaction is cytidine(34) in elongator tRNA(Met) + acetyl-CoA + ATP + H2O = N(4)-acetylcytidine(34) in elongator tRNA(Met) + ADP + phosphate + CoA + H(+). Catalyzes the formation of N(4)-acetylcytidine (ac(4)C) at the wobble position of tRNA(Met), by using acetyl-CoA as an acetyl donor and ATP (or GTP). This Yersinia pestis (strain D106004) protein is tRNA(Met) cytidine acetyltransferase TmcA.